The sequence spans 302 residues: MKSNNILDIETENINKNSLDIDKKSTSEIIKIINNEDIKVAYAIKKELNQISNVIDLIFERFKKGGRLIYIGSGTSGRLGILDASEMYPTYGIDQNRIIGIIAGGNKAIKNPIEGAEDNEKLAIVDLNKIKLNSFDTVIGIASSGKTPYVLSALKYANKKDALSIGLCMVKNSEMTKIANQVISIKTGAEIITGSTRMKAGTATKLVCNMITTTLMIKLGKVYKNLMIDLVATNDKLKNRAFKIVKQLTSAKDQIIYKALAESNFSCKHAIVMILRKISYNESVLLLENCDNSLTKLLEEKV.

Positions 58 to 221 (IFERFKKGGR…TTTLMIKLGK (164 aa)) constitute an SIS domain. Glutamate 86 serves as the catalytic Proton donor. Residue glutamate 117 is part of the active site.

This sequence belongs to the GCKR-like family. MurNAc-6-P etherase subfamily. As to quaternary structure, homodimer.

The enzyme catalyses N-acetyl-D-muramate 6-phosphate + H2O = N-acetyl-D-glucosamine 6-phosphate + (R)-lactate. Its pathway is amino-sugar metabolism; N-acetylmuramate degradation. Specifically catalyzes the cleavage of the D-lactyl ether substituent of MurNAc 6-phosphate, producing GlcNAc 6-phosphate and D-lactate. The polypeptide is N-acetylmuramic acid 6-phosphate etherase (Mycoplasma mycoides subsp. mycoides SC (strain CCUG 32753 / NCTC 10114 / PG1)).